The primary structure comprises 140 residues: Large ribosomal subunit protein bL17 (140 aa).

This sequence belongs to the bacterial ribosomal protein bL17 family. Part of the 50S ribosomal subunit. Contacts protein L32.

The chain is Large ribosomal subunit protein bL17 from Ruegeria pomeroyi (strain ATCC 700808 / DSM 15171 / DSS-3) (Silicibacter pomeroyi).